Consider the following 152-residue polypeptide: UPF0178 protein NIS_0137 (152 aa).

It belongs to the UPF0178 family.

The chain is UPF0178 protein NIS_0137 from Nitratiruptor sp. (strain SB155-2).